The chain runs to 1095 residues: MATLAYSIEVEGLEDETLVVRGFHGQESLSNSVFLGQACYGFRYEVQLASRVSNLTAEQMVDKRAELKLYRNSQLVQRVHGIVRAFSQGDIGHHHTFYQLTLVPALERLSLRHNSRIFQKQTVPEILSILLQEMGINDYAFALKRDGVQREFCVQYRESDIDFLHRLAAEEGLVYSFVHEAGKHTLYFSDASDSLSKLPEPIPYNALVGGAIDTPYIHGLTYRTQAEVSEVQLKDYSFKKPAYSFLQTVQGTELDYQQTRYQHFDAPGRYKDDVNGAAFSQIRLDYLRRHAHTATGQSNEPLLRAGYKFDLQEHLDPAMNRDWVVVSINHQGEQPQALQEDGGSGATTYSNQFSLIPGHLHWRAEPQPKPQVDGPMIATVVGPEGEEIFCDEHGRVKIHFPWDRYSNGNEQSSCWVRVSQGWAGSQYGFIAIPRIGHEVIVEFLNGDPDQPIITGRTYHATNTPPYTLPEHKTKTVLRTETHQGEGFNELSFEDQAGKEQIYLHAQKDFDGLIENDQFTQIKHNQHLTVEWESREAVTGEQVLSIEGSLHVKTGKVRVNEAGTEIHVKAGQKVVIEAGSEITVKAGGSFVKVDPAGVHLSGALVNLNSGGSAGSGSGFGGAMPALPGGLEPAVALAPPQTISYQALLQAEQANVPAVKVCPLAAQEATPAVNSITPPPPPPIAPPMAPPQPIMNPQPTANAQPNLGRSTKATPDFPTHFPKSSIGIENELAGLVVAMPANSAQKFGYVKSAQGDALFMLTKDMNQGSYQRPPSLQDGKNYQNWQTHTVELVSYPCEMDDKAAVETRKQAMLWLATHFTTHIDQSNHQPLAPIQSEDGRFVIEITNAKHVIAAGNGISAESQGQTITMTPSGQQATVGVAAKGFGTSATPELRLLESAPWYQKSLKSQFASLTSAENLDDKELAANVFAYLTSIYLKTAELAKKFGIYINEWDPMSEQITPNANGLTDPKVKNAWEILPRTKPSKIVEILSKSDAKAVMKHIKPQLQSRYSESLSKNVFQYFQDGGEVAGHGINNATVGDKHSPELAILFEFRTVPNELQSYLPKTESTTKSEVKLLDQFDPMKRKTVIQQVESLV.

The ACD domain occupies 712–1095; it reads TPDFPTHFPK…TVIQQVESLV (384 aa). 723–727 is an ATP binding site; it reads SIGIE. Mg(2+)-binding residues include E727 and E789. An ATP-binding site is contributed by S792. Q873 is a binding site for Mg(2+). Position 979 (R979) interacts with ATP. Residue E1050 participates in Mg(2+) binding.

It belongs to the VgrG protein family. In terms of assembly, interacts with protein VC1417. The cofactor is Mg(2+).

The protein localises to the secreted. Its subcellular location is the host cytoplasm. The protein resides in the host cytosol. In terms of biological role, part of the type VI secretion system (T6SS) specialized secretion system, which delivers several virulence factors in both prokaryotic and eukaryotic cells during infection. Forms the spike at the tip of the elongating tube probably formed by hemolysin co-regulated protein/Hcp. Allows the delivery of the TseL antibacterial toxin to target cells where it exerts its toxicity. Also acts directly as an actin-directed toxin that catalyzes the covalent cross-linking of host cytoplasmic monomeric actin. Mediates the cross-link between 'Lys-50' of one monomer and 'Glu-270' of another actin monomer, resulting in formation of highly toxic actin oligomers that cause cell rounding. The toxin can be highly efficient at very low concentrations by acting on formin homology family proteins: toxic actin oligomers bind with high affinity to formins and adversely affect both nucleation and elongation abilities of formins, causing their potent inhibition in both profilin-dependent and independent manners. Acts as an acid--amino-acid ligase that transfers the gamma-phosphoryl group of ATP to the 'Glu-270' actin residue, resulting in the formation of an activated acyl phosphate intermediate. This intermediate is further hydrolyzed and the energy of hydrolysis is utilized for the formation of the amide bond between actin subunits. In Vibrio cholerae serotype O1 (strain ATCC 39541 / Classical Ogawa 395 / O395), this protein is Actin cross-linking toxin VgrG1.